Reading from the N-terminus, the 315-residue chain is Outer membrane protease IcsP (315 aa).

The first 20 residues, M1–A20, serve as a signal peptide directing secretion. Catalysis depends on residues D103, D105, D230, and H232.

This sequence belongs to the peptidase A26 family.

It localises to the cell outer membrane. Protease responsible for the cleavage of IcsA between 'Arg-758' and 'Arg-759', removing the entire alpha domain from IscA localized on the bacterial surface. This proteolytic activity contributes to the maintenance of a tight polar cap of IcsA, which is important to Shigella actin-based motility. This Shigella flexneri protein is Outer membrane protease IcsP (icsP).